A 371-amino-acid chain; its full sequence is Carlactonoate CLA methyltransferase (371 aa).

Tyrosine 21 lines the S-adenosyl-L-homocysteine pocket. Glutamine 28 is a binding site for (11R)-carlactonoate. S-adenosyl-L-homocysteine is bound by residues cysteine 62, asparagine 67, aspartate 101, leucine 102, serine 141, and phenylalanine 142. (11R)-carlactonoate contacts are provided by histidine 162 and tryptophan 163. Residues asparagine 180, aspartate 266, tyrosine 268, and aspartate 269 each contribute to the Mg(2+) site.

The protein belongs to the methyltransferase superfamily. Type-7 methyltransferase family. SABATH subfamily. As to quaternary structure, homodimer. Mg(2+) serves as cofactor.

The enzyme catalyses (11R)-carlactonoate + S-adenosyl-L-methionine = (11R)-methyl carlactonoate + S-adenosyl-L-homocysteine. Functionally, methyltransferase involved in the biosynthesis of strigolactone natural products, bioactive compounds promoting plant fitness and soil microbe interactions, but preventing shoot branching. Catalyzes the biosynthesis of (11R)-methyl carlactonoate (MeCLA) from (11R)-carlactonoate (CLA), downstream of MAX1; MeCLA is probably biologically active as a hormone regulating shoot branching and serves as a precursor of non-canonical strigolactones (SLs). This is Carlactonoate CLA methyltransferase from Arabidopsis thaliana (Mouse-ear cress).